The chain runs to 124 residues: Protein RibT (124 aa).

The 122-residue stretch at I3–N124 folds into the N-acetyltransferase domain.

Functionally, involved in riboflavin biosynthesis. This is Protein RibT (ribT) from Bacillus subtilis (strain 168).